Consider the following 336-residue polypeptide: Inositol 2-dehydrogenase (336 aa).

It belongs to the Gfo/Idh/MocA family. Homotetramer.

It catalyses the reaction myo-inositol + NAD(+) = scyllo-inosose + NADH + H(+). In terms of biological role, involved in the oxidation of myo-inositol (MI) to 2-keto-myo-inositol (2KMI or 2-inosose). The chain is Inositol 2-dehydrogenase from Pseudomonas syringae pv. syringae (strain B728a).